A 207-amino-acid polypeptide reads, in one-letter code: Ras-related protein Rab-8A (207 aa).

Residues S17, G18, V19, G20, K21, T22, C23, S35, S39, and T40 each contribute to the GTP site. Residue T22 participates in Mg(2+) binding. 2 short sequence motifs (switch) span residues 31-45 (DAFN…GIDF) and 63-80 (DTAG…YYRG). T40 and D63 together coordinate Mg(2+). G66 is a GTP binding site. The residue at position 72 (T72) is a Phosphothreonine. 5 residues coordinate GTP: N121, K122, D124, A152, and K153. 2 positions are modified to phosphoserine: S181 and S185. C204 is modified (cysteine methyl ester). C204 carries S-geranylgeranyl cysteine lipidation. Residues 205-207 (VLL) constitute a propeptide, removed in mature form.

It belongs to the small GTPase superfamily. Rab family. As to quaternary structure, interacts (GTP-bound form) with MICALL1; regulates RAB8A association with recycling endosomes. Interacts with MICALL2; competes with RAB13 and is involved in E-cadherin endocytic recycling. Interacts (GTP-bound form) with MICAL1, MICALCL, MICAL3, EHBP1 and EHBP1L1; at least in case of MICAL1, MICALCL, MICAL3 and EHBP1L1 two molecules of RAB8A can bind to one molecule of the effector protein; ternary complexes of RAB8A, RAB13 and either MICAL1 or EHBP1L1 are possible. Interacts with EHD1. Interacts with MAP4K2 and SYTL4. Interacts with SGSM1 and SGSM3. Interacts with RABIF, RIMS2, RPH3A and RPH3A. Interacts with OPTN. Interacts with RAB3IP, RAB3IP functions as guanine exchange factor (GEF). Interacts with MYO5B. Interacts with CIMAP3. Interacts with BIRC6/bruce. Interacts with OCRL. Interacts with AHI1. Interacts with DCDC1. Interacts with LRRK2; interaction facilitates phosphorylation of Thr-72. Interacts with RAB31P, GDI1, GDI2, CHM, CHML, RABGGTA, RABGGTB, TBC1D15 and INPP5B; these interactions are dependent on Thr-72 not being phosphorylated. Interacts with RILPL1 and RILPL2; these interactions are dependent on the phosphorylation of Thr-72 by LRRK2. Interacts with DZIP1; prevents inhibition by the GDP-dissociation inhibitor GDI2. Interacts (in GDP-bound form) with RAB3IP/Rabin8, RAB3IP functions as guanine exchange factor (GEF) towards RAB8A. Interacts (in GDP-bound form) with RPGR, RPGR functions as GEF towards RAB8A. It depends on Mg(2+) as a cofactor. Post-translationally, phosphorylation of Thr-72 in the switch II region by LRRK2 prevents the association of RAB regulatory proteins, including CHM, CHML and RAB GDP dissociation inhibitors GDI1 and GDI2. Phosphorylation by LRRK2 is required for localization to stressed lysosomes.

Its subcellular location is the cell membrane. The protein localises to the golgi apparatus. It localises to the endosome membrane. It is found in the recycling endosome membrane. The protein resides in the cell projection. Its subcellular location is the cilium. The protein localises to the cytoplasmic vesicle. It localises to the phagosome membrane. It is found in the cytoplasm. The protein resides in the cytoskeleton. Its subcellular location is the microtubule organizing center. The protein localises to the centrosome. It localises to the centriole. It is found in the cilium basal body. The protein resides in the midbody. Its subcellular location is the lysosome. The catalysed reaction is GTP + H2O = GDP + phosphate + H(+). With respect to regulation, regulated by guanine nucleotide exchange factors (GEFs) such as RAB3IP/Rabin8 and RPGR which promote the exchange of bound GDP for free GTP, GTPase activating proteins (GAPs) which increase the GTP hydrolysis activity, and GDP dissociation inhibitors (GDIs) which inhibit the dissociation of the nucleotide from the GTPase. Activated in response to insulin. In terms of biological role, the small GTPases Rab are key regulators of intracellular membrane trafficking, from the formation of transport vesicles to their fusion with membranes. Rabs cycle between an inactive GDP-bound form and an active GTP-bound form that is able to recruit to membranes different sets of downstream effectors directly responsible for vesicle formation, movement, tethering and fusion. RAB8A is involved in polarized vesicular trafficking and neurotransmitter release. Together with RAB11A, RAB3IP, the exocyst complex, PARD3, PRKCI, ANXA2, CDC42 and DNMBP promotes transcytosis of PODXL to the apical membrane initiation sites (AMIS), apical surface formation and lumenogenesis. Regulates the compacted morphology of the Golgi. Together with MYO5B and RAB11A participates in epithelial cell polarization. Also involved in membrane trafficking to the cilium and ciliogenesis. Together with MICALL2, may also regulate adherens junction assembly. May play a role in insulin-induced transport to the plasma membrane of the glucose transporter GLUT4 and therefore play a role in glucose homeostasis. Involved in autophagy. Participates in the export of a subset of neosynthesized proteins through a Rab8-Rab10-Rab11-dependent endososomal export route. Targeted to and stabilized on stressed lysosomes through LRRK2 phosphorylation. Suppresses stress-induced lysosomal enlargement through EHBP1 and EHNP1L1 effector proteins. The polypeptide is Ras-related protein Rab-8A (RAB8A) (Bos taurus (Bovine)).